The primary structure comprises 210 residues: Orotate phosphoribosyltransferase (210 aa).

5-phospho-alpha-D-ribose 1-diphosphate-binding positions include Arg-94, Lys-98, His-100, and 120 to 128 (EDLISTGGS). Ser-124 provides a ligand contact to orotate.

Belongs to the purine/pyrimidine phosphoribosyltransferase family. PyrE subfamily. In terms of assembly, homodimer. Mg(2+) is required as a cofactor.

It carries out the reaction orotidine 5'-phosphate + diphosphate = orotate + 5-phospho-alpha-D-ribose 1-diphosphate. It participates in pyrimidine metabolism; UMP biosynthesis via de novo pathway; UMP from orotate: step 1/2. In terms of biological role, catalyzes the transfer of a ribosyl phosphate group from 5-phosphoribose 1-diphosphate to orotate, leading to the formation of orotidine monophosphate (OMP). In Bacillus cytotoxicus (strain DSM 22905 / CIP 110041 / 391-98 / NVH 391-98), this protein is Orotate phosphoribosyltransferase.